Reading from the N-terminus, the 265-residue chain is Insulin-like growth factor-binding protein 2-B (265 aa).

Positions 1-17 (MSLALLCSLLLVHGSLG) are cleaved as a signal peptide. The 81-residue stretch at 19–99 (IVFRCPSCTA…IQGLGRCENK (81 aa)) folds into the IGFBP N-terminal domain. Intrachain disulfides connect C23-C49, C26-C51, C34-C52, C41-C55, C63-C76, and C70-C96. The span at 107 to 122 (TNQESAAHSGEVNGTR) shows a compositional bias: polar residues. Disordered stretches follow at residues 107 to 128 (TNQESAAHSGEVNGTRSPPMKK) and 144 to 170 (HHNNKRTRMYNTQDDPKTPHPKQSQCQ). A Thyroglobulin type-1 domain is found at 166–248 (QSQCQQELDK…SDKVRGDPNC (83 aa)). 3 disulfides stabilise this stretch: C169–C203, C214–C225, and C227–C248. A disordered region spans residues 238 to 265 (SSDKVRGDPNCSQYYGGPELEPPTAQQK). Residues 243–245 (RGD) carry the Cell attachment site motif.

As to quaternary structure, interacts with igf2. Interacts with igf1. In terms of tissue distribution, in early embryos, expressed at a low level in most tissues with expression becoming abundant in the liver by 96 hours post-fertilization (hpf). The expression pattern in adults exhibits sexual dimorphism; in adult males expression is limited exclusively to the liver whereas in adult females expression is observed in the liver and other tissues including the gut, kidney, ovary and muscle.

The protein resides in the secreted. In terms of biological role, IGF-binding proteins prolong the half-life of the IGFs and have been shown to either inhibit or stimulate the growth promoting effects of the IGFs on cell culture. They alter the interaction of IGFs with their cell surface receptors. This is Insulin-like growth factor-binding protein 2-B from Danio rerio (Zebrafish).